The primary structure comprises 275 residues: NH(3)-dependent NAD(+) synthetase (275 aa).

50–57 (GISGGVDS) contributes to the ATP binding site. Residue aspartate 56 participates in Mg(2+) binding. Residue arginine 147 participates in deamido-NAD(+) binding. ATP is bound at residue threonine 167. Position 172 (glutamate 172) interacts with Mg(2+). Deamido-NAD(+) contacts are provided by lysine 180 and aspartate 187. Lysine 196 and threonine 218 together coordinate ATP. Position 267-268 (267-268 (HK)) interacts with deamido-NAD(+).

The protein belongs to the NAD synthetase family. In terms of assembly, homodimer.

The enzyme catalyses deamido-NAD(+) + NH4(+) + ATP = AMP + diphosphate + NAD(+) + H(+). Its pathway is cofactor biosynthesis; NAD(+) biosynthesis; NAD(+) from deamido-NAD(+) (ammonia route): step 1/1. Functionally, catalyzes the ATP-dependent amidation of deamido-NAD to form NAD. Uses ammonia as a nitrogen source. The protein is NH(3)-dependent NAD(+) synthetase of Pseudomonas syringae pv. syringae (strain B728a).